Here is a 315-residue protein sequence, read N- to C-terminus: 2,3-dihydroxyphenylpropionate/2,3-dihydroxicinnamic acid 1,2-dioxygenase (315 aa).

H118 functions as the Proton donor in the catalytic mechanism. The active-site Proton acceptor is the H182.

This sequence belongs to the LigB/MhpB extradiol dioxygenase family. In terms of assembly, homotetramer. Fe(2+) is required as a cofactor.

The enzyme catalyses 3-(2,3-dihydroxyphenyl)propanoate + O2 = (2Z,4E)-2-hydroxy-6-oxonona-2,4-dienedioate + H(+). It catalyses the reaction (2E)-3-(2,3-dihydroxyphenyl)prop-2-enoate + O2 = (2Z,4E,7E)-2-hydroxy-6-oxonona-2,4,7-trienedioate + H(+). Its pathway is aromatic compound metabolism; 3-phenylpropanoate degradation. Its function is as follows. Catalyzes the non-heme iron(II)-dependent oxidative cleavage of 2,3-dihydroxyphenylpropionic acid and 2,3-dihydroxicinnamic acid into 2-hydroxy-6-ketononadienedioate and 2-hydroxy-6-ketononatrienedioate, respectively. This Mycolicibacterium gilvum (strain PYR-GCK) (Mycobacterium gilvum (strain PYR-GCK)) protein is 2,3-dihydroxyphenylpropionate/2,3-dihydroxicinnamic acid 1,2-dioxygenase.